The sequence spans 166 residues: CDP-archaeol synthase (166 aa).

4 helical membrane passes run leucine 42–alanine 62, valine 73–valine 93, alanine 103–isoleucine 123, and phenylalanine 128–leucine 148.

This sequence belongs to the CDP-archaeol synthase family. The cofactor is Mg(2+).

It localises to the cell membrane. It catalyses the reaction 2,3-bis-O-(geranylgeranyl)-sn-glycerol 1-phosphate + CTP + H(+) = CDP-2,3-bis-O-(geranylgeranyl)-sn-glycerol + diphosphate. Its pathway is membrane lipid metabolism; glycerophospholipid metabolism. Its function is as follows. Catalyzes the formation of CDP-2,3-bis-(O-geranylgeranyl)-sn-glycerol (CDP-archaeol) from 2,3-bis-(O-geranylgeranyl)-sn-glycerol 1-phosphate (DGGGP) and CTP. This reaction is the third ether-bond-formation step in the biosynthesis of archaeal membrane lipids. The polypeptide is CDP-archaeol synthase (Methanosphaerula palustris (strain ATCC BAA-1556 / DSM 19958 / E1-9c)).